The chain runs to 319 residues: Beta-ketoacyl-[acyl-carrier-protein] synthase III (319 aa).

Active-site residues include Cys115 and His246. The tract at residues 247-251 (QANLR) is ACP-binding. The active site involves Asn276.

Belongs to the thiolase-like superfamily. FabH family. Homodimer.

It is found in the cytoplasm. It carries out the reaction malonyl-[ACP] + acetyl-CoA + H(+) = 3-oxobutanoyl-[ACP] + CO2 + CoA. It functions in the pathway lipid metabolism; fatty acid biosynthesis. Its function is as follows. Catalyzes the condensation reaction of fatty acid synthesis by the addition to an acyl acceptor of two carbons from malonyl-ACP. Catalyzes the first condensation reaction which initiates fatty acid synthesis and may therefore play a role in governing the total rate of fatty acid production. Possesses both acetoacetyl-ACP synthase and acetyl transacylase activities. Its substrate specificity determines the biosynthesis of branched-chain and/or straight-chain of fatty acids. The polypeptide is Beta-ketoacyl-[acyl-carrier-protein] synthase III (Coxiella burnetii (strain RSA 493 / Nine Mile phase I)).